A 309-amino-acid polypeptide reads, in one-letter code: Methionyl-tRNA formyltransferase (309 aa).

109–112 lines the (6S)-5,6,7,8-tetrahydrofolate pocket; the sequence is SLLP.

Belongs to the Fmt family.

It carries out the reaction L-methionyl-tRNA(fMet) + (6R)-10-formyltetrahydrofolate = N-formyl-L-methionyl-tRNA(fMet) + (6S)-5,6,7,8-tetrahydrofolate + H(+). In terms of biological role, attaches a formyl group to the free amino group of methionyl-tRNA(fMet). The formyl group appears to play a dual role in the initiator identity of N-formylmethionyl-tRNA by promoting its recognition by IF2 and preventing the misappropriation of this tRNA by the elongation apparatus. The protein is Methionyl-tRNA formyltransferase of Clostridium botulinum (strain Alaska E43 / Type E3).